A 172-amino-acid chain; its full sequence is MPDYYDIGTIVNTHGIRGEVRVLVTTDFPADRFKVGNTVYVATSPKTALTIQSVREHKGLTLLTFKDYTDINQVLPFKGKKLQVTETALQPLDEGSYYYKDIIGLTVIDEQGQTLGKVNEILSPGPNDVWVIPRSGKSDILLPFLKSVVQSIDLDQKVAHVIVPEGLIDDAD.

The PRC barrel domain maps to 94-167 (EGSYYYKDII…VAHVIVPEGL (74 aa)).

This sequence belongs to the RimM family. As to quaternary structure, binds ribosomal protein uS19.

It is found in the cytoplasm. An accessory protein needed during the final step in the assembly of 30S ribosomal subunit, possibly for assembly of the head region. Essential for efficient processing of 16S rRNA. May be needed both before and after RbfA during the maturation of 16S rRNA. It has affinity for free ribosomal 30S subunits but not for 70S ribosomes. The chain is Ribosome maturation factor RimM from Lacticaseibacillus paracasei (strain ATCC 334 / BCRC 17002 / CCUG 31169 / CIP 107868 / KCTC 3260 / NRRL B-441) (Lactobacillus paracasei).